The sequence spans 241 residues: Probable septum site-determining protein MinC (241 aa).

It belongs to the MinC family. As to quaternary structure, interacts with MinD and FtsZ.

Its function is as follows. Cell division inhibitor that blocks the formation of polar Z ring septums. Rapidly oscillates between the poles of the cell to destabilize FtsZ filaments that have formed before they mature into polar Z rings. Prevents FtsZ polymerization. In Rhizobium rhizogenes (strain K84 / ATCC BAA-868) (Agrobacterium radiobacter), this protein is Probable septum site-determining protein MinC.